Reading from the N-terminus, the 354-residue chain is Histidinol-phosphate aminotransferase (354 aa).

Lys215 is modified (N6-(pyridoxal phosphate)lysine).

It belongs to the class-II pyridoxal-phosphate-dependent aminotransferase family. Histidinol-phosphate aminotransferase subfamily. In terms of assembly, homodimer. Pyridoxal 5'-phosphate serves as cofactor.

The enzyme catalyses L-histidinol phosphate + 2-oxoglutarate = 3-(imidazol-4-yl)-2-oxopropyl phosphate + L-glutamate. Its pathway is amino-acid biosynthesis; L-histidine biosynthesis; L-histidine from 5-phospho-alpha-D-ribose 1-diphosphate: step 7/9. In Vesicomyosocius okutanii subsp. Calyptogena okutanii (strain HA), this protein is Histidinol-phosphate aminotransferase.